Consider the following 860-residue polypeptide: Alanine--tRNA ligase (860 aa).

The Zn(2+) site is built by H553, H557, C655, and H659.

It belongs to the class-II aminoacyl-tRNA synthetase family. It depends on Zn(2+) as a cofactor.

Its subcellular location is the cytoplasm. It carries out the reaction tRNA(Ala) + L-alanine + ATP = L-alanyl-tRNA(Ala) + AMP + diphosphate. Functionally, catalyzes the attachment of alanine to tRNA(Ala) in a two-step reaction: alanine is first activated by ATP to form Ala-AMP and then transferred to the acceptor end of tRNA(Ala). Also edits incorrectly charged Ser-tRNA(Ala) and Gly-tRNA(Ala) via its editing domain. This is Alanine--tRNA ligase from Legionella pneumophila (strain Paris).